The following is a 368-amino-acid chain: Nuclease EXOG, mitochondrial (368 aa).

Residues 1-41 constitute a mitochondrion transit peptide; sequence MAIKSIASRLRGSRRFLSGFVAGAVVGAAGAGLAALQFFRS. The active-site Proton acceptor is the His140. Position 171 (Asn171) interacts with a divalent metal cation.

It belongs to the DNA/RNA non-specific endonuclease family. In terms of assembly, homodimer. It depends on a divalent metal cation as a cofactor. As to expression, ubiquitous.

It is found in the mitochondrion inner membrane. Functionally, endo/exonuclease with nicking activity towards supercoiled DNA, a preference for single-stranded DNA and 5'-3' exonuclease activity. In Homo sapiens (Human), this protein is Nuclease EXOG, mitochondrial (EXOG).